Consider the following 312-residue polypeptide: TATA box-binding protein-like 2 (312 aa).

The segment at 65–115 (DELSTQDEPSQVEKESKNEDSGIYTDCPQKESTQADIDTSNSAQNTSQFNL) is disordered. A compositionally biased stretch (basic and acidic residues) spans 75–84 (QVEKESKNED). The span at 94–115 (KESTQADIDTSNSAQNTSQFNL) shows a compositional bias: polar residues.

The protein belongs to the TBP family. As to expression, in adults, expressed in the gonads, with expression much higher in the ovary than the testis (at protein level). Shows a small amount of expression in other adult organs, including the brain and kidney. Embryonic expression is mostly ubiquitous except in early gastrula embryos where expression is asymmetric.

The protein localises to the nucleus. TATA box-binding transcription factor. Members of the TBP family are differentially required to regulate transcription and development during early embryogenesis. Commits mesoderm to the hematopoietic lineage during hemopoiesis, acting via mespa. Binds to the mespa promoter. This chain is TATA box-binding protein-like 2, found in Danio rerio (Zebrafish).